Reading from the N-terminus, the 156-residue chain is Endogenous retrovirus group K member 21 Pro protein (156 aa).

A Peptidase A2 domain is found at F21–L96. Residue D26 is part of the active site. A G-patch domain is found at Y111 to F156.

Belongs to the peptidase A2 family. HERV class-II K(HML-2) subfamily. Active as a homodimer. Post-translationally, autoproteolytically processed at the N-terminus. Expected C-terminal autoprocessing not detected. The sequence shown is that of the processed Pro protein.

It carries out the reaction Processing at the authentic HIV-1 PR recognition site and release of the mature p17 matrix and the p24 capsid protein, as a result of the cleavage of the -SQNY-|-PIVQ- cleavage site.. In terms of biological role, retroviral proteases have roles in the processing of the primary translation products and the maturation of the viral particle. Endogenous Pro proteins may have kept, lost or modified their original function during evolution. In Homo sapiens (Human), this protein is Endogenous retrovirus group K member 21 Pro protein (ERVK-21).